The primary structure comprises 484 residues: UDP-N-acetylmuramate--L-alanine ligase (484 aa).

G122–T128 is a binding site for ATP.

It belongs to the MurCDEF family.

The protein resides in the cytoplasm. It catalyses the reaction UDP-N-acetyl-alpha-D-muramate + L-alanine + ATP = UDP-N-acetyl-alpha-D-muramoyl-L-alanine + ADP + phosphate + H(+). Its pathway is cell wall biogenesis; peptidoglycan biosynthesis. Its function is as follows. Cell wall formation. In Mycobacterium sp. (strain JLS), this protein is UDP-N-acetylmuramate--L-alanine ligase.